We begin with the raw amino-acid sequence, 101 residues long: UPF0473 protein spr0177 (101 aa).

It belongs to the UPF0473 family.

This chain is UPF0473 protein spr0177, found in Streptococcus pneumoniae (strain ATCC BAA-255 / R6).